A 113-amino-acid polypeptide reads, in one-letter code: Hydrogenase maturation factor HypA (113 aa).

A Ni(2+)-binding site is contributed by H2. The Zn(2+) site is built by C73, C76, C89, and C92.

Belongs to the HypA/HybF family.

Functionally, involved in the maturation of [NiFe] hydrogenases. Required for nickel insertion into the metal center of the hydrogenase. The chain is Hydrogenase maturation factor HypA from Moorella thermoacetica (strain ATCC 39073 / JCM 9320).